A 263-amino-acid chain; its full sequence is Leukocyte-associated immunoglobulin-like receptor 1 (263 aa).

The N-terminal stretch at 1–21 (MPLHSVIVLVLVLCLGWKSNT) is a signal peptide. One can recognise an Ig-like C2-type domain in the interval 27–112 (SDFTICAEPG…VWSQRSNDLQ (86 aa)). Residues Cys-49 and Cys-96 are joined by a disulfide bond. An N-linked (GlcNAc...) asparagine glycan is attached at Asn-87. The chain crosses the membrane as a helical span at residues 144-164 (ILTVVSVIFLLCLSLFLFCFL). Short sequence motifs (ITIM motif) lie at residues 225–230 (VTYAQL) and 255–260 (STYAAI). 2 positions are modified to phosphotyrosine: Tyr-227 and Tyr-257.

As to quaternary structure, interacts with SH2 domains of tyrosine-protein phosphatases PTPN6 and PTPN11. The interaction with PTPN6 is constitutive. Interacts with the SH2 domain of CSK. Binds with high affinity to extracellular matrix collagens, the interaction is functionally important. In terms of processing, phosphorylation at Tyr-227 and Tyr-257 activates it. May be phosphorylated by LCK. Post-translationally, N-glycosylated. In terms of tissue distribution, expressed in lymphoid and non-lymphoid organs.

The protein localises to the membrane. Functions as an inhibitory receptor that plays a constitutive negative regulatory role on cytolytic function of natural killer (NK) cells, B-cells and T-cells. Activation by Tyr phosphorylation results in recruitment and activation of the phosphatases PTPN6 and PTPN11. It also reduces the increase of intracellular calcium evoked by B-cell receptor ligation. May also play its inhibitory role independently of SH2-containing phosphatases. Modulates cytokine production in CD4+ T-cells, down-regulating IL2 and IFNG production while inducing secretion of transforming growth factor beta. Also down-regulates IgG and IgE production in B-cells as well as IL8, IL10 and TNF secretion. Inhibits proliferation and induces apoptosis in myeloid leukemia cell lines as well as prevents nuclear translocation of NF-kappa-B p65 subunit/RELA and phosphorylation of I-kappa-B alpha/CHUK in these cells. Inhibits the differentiation of peripheral blood precursors towards dendritic cells. The sequence is that of Leukocyte-associated immunoglobulin-like receptor 1 (Lair1) from Rattus norvegicus (Rat).